Reading from the N-terminus, the 754-residue chain is Elongation factor G-1, mitochondrial (754 aa).

The N-terminal 17 residues, M1–F17, are a transit peptide targeting the mitochondrion. The 278-residue stretch at D63–N340 folds into the tr-type G domain. GTP contacts are provided by residues A72–T79, D139–H143, and N193–D196.

This sequence belongs to the TRAFAC class translation factor GTPase superfamily. Classic translation factor GTPase family. EF-G/EF-2 subfamily. As to expression, expressed in cotyledons and adult leaves at the same levels.

It localises to the mitochondrion. The protein operates within protein biosynthesis; polypeptide chain elongation. Mitochondrial GTPase that catalyzes the GTP-dependent ribosomal translocation step during translation elongation. During this step, the ribosome changes from the pre-translocational (PRE) to the post-translocational (POST) state as the newly formed A-site-bound peptidyl-tRNA and P-site-bound deacylated tRNA move to the P and E sites, respectively. Catalyzes the coordinated movement of the two tRNA molecules, the mRNA and conformational changes in the ribosome. This is Elongation factor G-1, mitochondrial (MEFG1) from Arabidopsis thaliana (Mouse-ear cress).